The primary structure comprises 150 residues: 3-hydroxyacyl-[acyl-carrier-protein] dehydratase FabZ (150 aa).

Residue histidine 54 is part of the active site.

The protein belongs to the thioester dehydratase family. FabZ subfamily.

Its subcellular location is the cytoplasm. The enzyme catalyses a (3R)-hydroxyacyl-[ACP] = a (2E)-enoyl-[ACP] + H2O. Involved in unsaturated fatty acids biosynthesis. Catalyzes the dehydration of short chain beta-hydroxyacyl-ACPs and long chain saturated and unsaturated beta-hydroxyacyl-ACPs. This Aliivibrio fischeri (strain ATCC 700601 / ES114) (Vibrio fischeri) protein is 3-hydroxyacyl-[acyl-carrier-protein] dehydratase FabZ.